The following is a 548-amino-acid chain: Eukaryotic translation initiation factor 3 subunit D (548 aa).

The residue at position 53 (lysine 53) is an N6-acetyllysine. At serine 161 the chain carries Phosphoserine. The interval aspartate 285–proline 299 is RNA gate. Disordered stretches follow at residues leucine 288 to proline 309 and proline 523 to threonine 548. The span at valine 291–proline 309 shows a compositional bias: polar residues. A phosphoserine mark is found at serine 528 and serine 529. Over residues serine 529 to threonine 548 the composition is skewed to acidic residues.

It belongs to the eIF-3 subunit D family. As to quaternary structure, component of the eukaryotic translation initiation factor 3 (eIF-3) complex, which is composed of 13 subunits: EIF3A, EIF3B, EIF3C, EIF3D, EIF3E, EIF3F, EIF3G, EIF3H, EIF3I, EIF3J, EIF3K, EIF3L and EIF3M. The eIF-3 complex appears to include 3 stable modules: module A is composed of EIF3A, EIF3B, EIF3G and EIF3I; module B is composed of EIF3F, EIF3H, and EIF3M; and module C is composed of EIF3C, EIF3D, EIF3E, EIF3K and EIF3L. EIF3C of module C binds EIF3B of module A and EIF3H of module B, thereby linking the three modules. EIF3J is a labile subunit that binds to the eIF-3 complex via EIF3B. The eIF-3 complex interacts with RPS6KB1 under conditions of nutrient depletion. Mitogenic stimulation leads to binding and activation of a complex composed of MTOR and RPTOR, leading to phosphorylation and release of RPS6KB1 and binding of EIF4B to eIF-3.

The protein localises to the cytoplasm. In terms of biological role, mRNA cap-binding component of the eukaryotic translation initiation factor 3 (eIF-3) complex, a complex required for several steps in the initiation of protein synthesis of a specialized repertoire of mRNAs. The eIF-3 complex associates with the 40S ribosome and facilitates the recruitment of eIF-1, eIF-1A, eIF-2:GTP:methionyl-tRNAi and eIF-5 to form the 43S pre-initiation complex (43S PIC). The eIF-3 complex stimulates mRNA recruitment to the 43S PIC and scanning of the mRNA for AUG recognition. The eIF-3 complex is also required for disassembly and recycling of post-termination ribosomal complexes and subsequently prevents premature joining of the 40S and 60S ribosomal subunits prior to initiation. The eIF-3 complex specifically targets and initiates translation of a subset of mRNAs involved in cell proliferation, including cell cycling, differentiation and apoptosis, and uses different modes of RNA stem-loop binding to exert either translational activation or repression. In the eIF-3 complex, EIF3D specifically recognizes and binds the 7-methylguanosine cap of a subset of mRNAs. The polypeptide is Eukaryotic translation initiation factor 3 subunit D (Pongo abelii (Sumatran orangutan)).